The primary structure comprises 104 residues: Precursor of CEP11 (104 aa).

A signal peptide spans 1-27 (MAKTRRVIYLFLTIVLLFCELIDEAQG). Positions 28-85 (SRFRCHHSEDYSCKKRSSHHHHHHHHHQQQQHHHKDTPPEELQGSIKTRRSKDIYGLN) are excised as a propeptide. A disordered region spans residues 37–104 (DYSCKKRSSH…SPGVGHLIKT (68 aa)). Basic residues predominate over residues 41–62 (KKRSSHHHHHHHHHQQQQHHHK). Hydroxyproline occurs at positions 92 and 96. A propeptide spanning residues 101-104 (LIKT) is cleaved from the precursor.

It belongs to the C-terminally encoded plant signaling peptide (CEP) family. In terms of assembly, interacts with CEP receptors (e.g. CEPR1 and CEPR2). In terms of processing, the mature small signaling peptide is generated by proteolytic processing of the longer precursor. Expressed in lateral root primordia and in lateral roots excluding the meristem region.

The protein resides in the secreted. Its subcellular location is the extracellular space. The protein localises to the apoplast. Extracellular signaling peptide that may regulate primary root growth rate and systemic nitrogen (N)-demand signaling. Mediates up-regulation of genes involved in N uptake and assimilation pathways. This is Precursor of CEP11 from Arabidopsis thaliana (Mouse-ear cress).